The following is a 215-amino-acid chain: 3-isopropylmalate dehydratase small subunit (215 aa).

The protein belongs to the LeuD family. LeuD type 1 subfamily. Heterodimer of LeuC and LeuD.

The enzyme catalyses (2R,3S)-3-isopropylmalate = (2S)-2-isopropylmalate. Its pathway is amino-acid biosynthesis; L-leucine biosynthesis; L-leucine from 3-methyl-2-oxobutanoate: step 2/4. Catalyzes the isomerization between 2-isopropylmalate and 3-isopropylmalate, via the formation of 2-isopropylmaleate. The chain is 3-isopropylmalate dehydratase small subunit from Stutzerimonas stutzeri (strain A1501) (Pseudomonas stutzeri).